Consider the following 179-residue polypeptide: Large ribosomal subunit protein uL5 (179 aa).

This sequence belongs to the universal ribosomal protein uL5 family. In terms of assembly, part of the 50S ribosomal subunit; part of the 5S rRNA/L5/L18/L25 subcomplex. Contacts the 5S rRNA and the P site tRNA. Forms a bridge to the 30S subunit in the 70S ribosome.

Functionally, this is one of the proteins that bind and probably mediate the attachment of the 5S RNA into the large ribosomal subunit, where it forms part of the central protuberance. In the 70S ribosome it contacts protein S13 of the 30S subunit (bridge B1b), connecting the 2 subunits; this bridge is implicated in subunit movement. Contacts the P site tRNA; the 5S rRNA and some of its associated proteins might help stabilize positioning of ribosome-bound tRNAs. This Rickettsia typhi (strain ATCC VR-144 / Wilmington) protein is Large ribosomal subunit protein uL5.